A 277-amino-acid polypeptide reads, in one-letter code: Large ribosomal subunit protein uL2 (277 aa).

The interval valine 223–threonine 264 is disordered.

It belongs to the universal ribosomal protein uL2 family. As to quaternary structure, part of the 50S ribosomal subunit. Forms a bridge to the 30S subunit in the 70S ribosome.

One of the primary rRNA binding proteins. Required for association of the 30S and 50S subunits to form the 70S ribosome, for tRNA binding and peptide bond formation. It has been suggested to have peptidyltransferase activity; this is somewhat controversial. Makes several contacts with the 16S rRNA in the 70S ribosome. In Nitrosomonas eutropha (strain DSM 101675 / C91 / Nm57), this protein is Large ribosomal subunit protein uL2.